The following is a 580-amino-acid chain: Alpha-thujene synthase, chloroplastic (580 aa).

The transit peptide at 1–32 (MALQLLTPSFSFQHSPSPHKLTTLRYTHHRIR) directs the protein to the chloroplast. The (2E)-geranyl diphosphate site is built by arginine 296, aspartate 333, aspartate 337, arginine 473, and aspartate 476. Positions 333 and 337 each coordinate Mg(2+). A DDXXD motif motif is present at residues 333–337 (DDVYD). The Mg(2+) site is built by aspartate 476, threonine 480, and glutamate 484.

Belongs to the terpene synthase family. Tpsb subfamily. Monomer. Mg(2+) serves as cofactor. Requires Mn(2+) as cofactor. Expressed in developing and mature fruits. Barely detectable in leaves and shoots.

It localises to the plastid. Its subcellular location is the chloroplast. The enzyme catalyses (2E)-geranyl diphosphate = alpha-thujene + diphosphate. It functions in the pathway secondary metabolite biosynthesis; terpenoid biosynthesis. Its function is as follows. Monoterpene synthase (TPS) involved in the biosynthesis of monoterpene natural products used by traditional Chinese medicine to treat headache, inflammation and intoxication. Catalyzes the conversion of (2E)-geranyl diphosphate (GPP) into alpha-thujene. The protein is Alpha-thujene synthase, chloroplastic of Litsea cubeba (Aromatic litsea).